The chain runs to 1400 residues: DNA-directed RNA polymerase subunit beta (1400 aa).

It belongs to the RNA polymerase beta chain family. As to quaternary structure, the RNAP catalytic core consists of 2 alpha, 1 beta, 1 beta' and 1 omega subunit. When a sigma factor is associated with the core the holoenzyme is formed, which can initiate transcription.

The enzyme catalyses RNA(n) + a ribonucleoside 5'-triphosphate = RNA(n+1) + diphosphate. Its function is as follows. DNA-dependent RNA polymerase catalyzes the transcription of DNA into RNA using the four ribonucleoside triphosphates as substrates. This is DNA-directed RNA polymerase subunit beta from Acidiphilium cryptum (strain JF-5).